A 46-amino-acid chain; its full sequence is GTP cyclohydrolase 1 (46 aa).

Cys7 contacts Zn(2+).

This sequence belongs to the GTP cyclohydrolase I family. As to quaternary structure, homomer.

It catalyses the reaction GTP + H2O = 7,8-dihydroneopterin 3'-triphosphate + formate + H(+). Its pathway is cofactor biosynthesis; 7,8-dihydroneopterin triphosphate biosynthesis; 7,8-dihydroneopterin triphosphate from GTP: step 1/1. The polypeptide is GTP cyclohydrolase 1 (folE) (Bacillus pumilus (Bacillus mesentericus)).